Consider the following 451-residue polypeptide: tRNA modification GTPase MnmE (451 aa).

3 residues coordinate (6S)-5-formyl-5,6,7,8-tetrahydrofolate: arginine 23, glutamate 80, and lysine 119. Residues 215–372 enclose the TrmE-type G domain; sequence GIKVVLTGQP…LRTVLLKTVG (158 aa). Asparagine 225 serves as a coordination point for K(+). GTP-binding positions include 225–230, 244–250, and 269–272; these read NVGKSS, TEIPGTT, and DTAG. Mg(2+) is bound at residue serine 229. K(+) contacts are provided by threonine 244, isoleucine 246, and threonine 249. Position 250 (threonine 250) interacts with Mg(2+). Lysine 451 lines the (6S)-5-formyl-5,6,7,8-tetrahydrofolate pocket.

Belongs to the TRAFAC class TrmE-Era-EngA-EngB-Septin-like GTPase superfamily. TrmE GTPase family. In terms of assembly, homodimer. Heterotetramer of two MnmE and two MnmG subunits. K(+) is required as a cofactor.

The protein localises to the cytoplasm. Exhibits a very high intrinsic GTPase hydrolysis rate. Involved in the addition of a carboxymethylaminomethyl (cmnm) group at the wobble position (U34) of certain tRNAs, forming tRNA-cmnm(5)s(2)U34. The chain is tRNA modification GTPase MnmE from Nitrosomonas eutropha (strain DSM 101675 / C91 / Nm57).